We begin with the raw amino-acid sequence, 256 residues long: Pimeloyl-[acyl-carrier protein] methyl ester esterase (256 aa).

The 228-residue stretch at 15–242 folds into the AB hydrolase-1 domain; sequence HLVLLHGWGL…AAHAPFISHP (228 aa). Substrate contacts are provided by residues tryptophan 22, 82-83, and 143-147; these read SL and FLALQ. Serine 82 functions as the Nucleophile in the catalytic mechanism. Active-site residues include aspartate 207 and histidine 235. Histidine 235 is a substrate binding site.

The protein belongs to the AB hydrolase superfamily. Carboxylesterase BioH family. Monomer.

Its subcellular location is the cytoplasm. It carries out the reaction 6-carboxyhexanoyl-[ACP] methyl ester + H2O = 6-carboxyhexanoyl-[ACP] + methanol + H(+). It participates in cofactor biosynthesis; biotin biosynthesis. In terms of biological role, the physiological role of BioH is to remove the methyl group introduced by BioC when the pimeloyl moiety is complete. It allows to synthesize pimeloyl-ACP via the fatty acid synthetic pathway through the hydrolysis of the ester bonds of pimeloyl-ACP esters. This chain is Pimeloyl-[acyl-carrier protein] methyl ester esterase, found in Escherichia coli O8 (strain IAI1).